We begin with the raw amino-acid sequence, 272 residues long: Indole-3-glycerol phosphate synthase (272 aa).

Belongs to the TrpC family.

It catalyses the reaction 1-(2-carboxyphenylamino)-1-deoxy-D-ribulose 5-phosphate + H(+) = (1S,2R)-1-C-(indol-3-yl)glycerol 3-phosphate + CO2 + H2O. The protein operates within amino-acid biosynthesis; L-tryptophan biosynthesis; L-tryptophan from chorismate: step 4/5. In Mycolicibacterium smegmatis (strain ATCC 700084 / mc(2)155) (Mycobacterium smegmatis), this protein is Indole-3-glycerol phosphate synthase.